Reading from the N-terminus, the 199-residue chain is Peroxiredoxin-1 (199 aa).

Ser2 is modified (N-acetylserine). Residues 6-165 (AKIGYPAPNF…IIRLVQAFQF (160 aa)) form the Thioredoxin domain. The residue at position 7 (Lys7) is an N6-acetyllysine; alternate. Lys7 is covalently cross-linked (Glycyl lysine isopeptide (Lys-Gly) (interchain with G-Cter in SUMO2); alternate). N6-acetyllysine occurs at positions 16 and 27. At Ser32 the chain carries Phosphoserine. Lys35 bears the N6-acetyllysine; alternate mark. Lys35 carries the N6-succinyllysine; alternate modification. Residue Cys52 is the Cysteine sulfenic acid (-SOH) intermediate of the active site. At Thr90 the chain carries Phosphothreonine. Lys120 participates in a covalent cross-link: Glycyl lysine isopeptide (Lys-Gly) (interchain with G-Cter in SUMO2). An N6-acetyllysine modification is found at Lys136. A Glycyl lysine isopeptide (Lys-Gly) (interchain with G-Cter in SUMO1) cross-link involves residue Lys185. Lys197 is subject to N6-acetyllysine.

Belongs to the peroxiredoxin family. AhpC/Prx1 subfamily. As to quaternary structure, homodimer; disulfide-linked, upon oxidation. 5 homodimers assemble to form a ring-like decamer. Interacts with GDPD5; forms a mixed-disulfide with GDPD5. Interacts with SESN1 and SESN2. Interacts with FAM107A. Post-translationally, phosphorylated on Thr-90 during the M-phase, which leads to a decrease in enzymatic activity. Acetylation increases reducing activity and resistance to superoxidation. Deacetylated by HDAC6 which decreases reducing activity. Found in various tissues; high concentration in liver.

The protein localises to the cytoplasm. The catalysed reaction is a hydroperoxide + [thioredoxin]-dithiol = an alcohol + [thioredoxin]-disulfide + H2O. In terms of biological role, thiol-specific peroxidase that catalyzes the reduction of hydrogen peroxide and organic hydroperoxides to water and alcohols, respectively. Plays a role in cell protection against oxidative stress by detoxifying peroxides and as sensor of hydrogen peroxide-mediated signaling events. Might participate in the signaling cascades of growth factors and tumor necrosis factor-alpha by regulating the intracellular concentrations of H(2)O(2). Reduces an intramolecular disulfide bond in GDPD5 that gates the ability to GDPD5 to drive postmitotic motor neuron differentiation. This Mus musculus (Mouse) protein is Peroxiredoxin-1 (Prdx1).